The chain runs to 299 residues: Probable lipid kinase YegS-like (299 aa).

Residues 2–133 enclose the DAGKc domain; sequence ATFPASLLIL…IDIAQVNDKT (132 aa). Residues Thr40, 66-72, and Thr95 each bind ATP; that span reads GDGTINE. Leu215, Asp218, and Leu220 together coordinate Mg(2+). Glu271 acts as the Proton acceptor in catalysis.

This sequence belongs to the diacylglycerol/lipid kinase family. YegS lipid kinase subfamily. It depends on Mg(2+) as a cofactor. Requires Ca(2+) as cofactor.

Its subcellular location is the cytoplasm. Probably phosphorylates lipids; the in vivo substrate is unknown. The polypeptide is Probable lipid kinase YegS-like (Citrobacter koseri (strain ATCC BAA-895 / CDC 4225-83 / SGSC4696)).